Consider the following 1382-residue polypeptide: Hepatocyte growth factor receptor (1382 aa).

Positions 1-24 (MRAPAVLAPGILVLLFTLVQRSCG) are cleaved as a signal peptide. The Extracellular segment spans residues 25–933 (ECKEALVKSE…VIVQPDQNFT (909 aa)). Residues 27-516 (KEALVKSEMN…TGKKITKIPL (490 aa)) form the Sema domain. The N-linked (GlcNAc...) asparagine glycan is linked to asparagine 45. Cystine bridges form between cysteine 95–cysteine 101, cysteine 98–cysteine 160, cysteine 133–cysteine 141, and cysteine 173–cysteine 176. Asparagine 106 is a glycosylation site (N-linked (GlcNAc...) asparagine). N-linked (GlcNAc...) asparagine glycosylation is found at asparagine 203 and asparagine 359. 2 disulfide bridges follow: cysteine 299–cysteine 364 and cysteine 386–cysteine 398. Asparagine 400 and asparagine 406 each carry an N-linked (GlcNAc...) asparagine glycan. 4 cysteine pairs are disulfide-bonded: cysteine 521/cysteine 539, cysteine 527/cysteine 562, cysteine 530/cysteine 546, and cysteine 542/cysteine 552. 3 IPT/TIG domains span residues 564-656 (PTIY…FSYV), 658-740 (PIIT…FSYQ), and 743-837 (PIVY…LIYV). Threonine 583 is a glycosylation site (O-linked (Man) threonine). N-linked (GlcNAc...) asparagine glycans are attached at residues asparagine 608 and asparagine 636. Residues threonine 677 and threonine 762 are each glycosylated (O-linked (Man) threonine). N-linked (GlcNAc...) asparagine glycans are attached at residues asparagine 786, asparagine 880, and asparagine 931. A helical transmembrane segment spans residues 934–956 (GLIVGVISISLIVLLLLGLFLWL). Over 957-1382 (KRRKQIKDLG…QDIIDGEGDT (426 aa)) the chain is Cytoplasmic. At serine 967 the chain carries Phosphoserine. Threonine 978 carries the post-translational modification Phosphothreonine. Phosphoserine is present on residues serine 991, serine 998, and serine 1001. Tyrosine 1004 carries the post-translational modification Phosphotyrosine. A Protein kinase domain is found at 1079–1346 (VHFNEVIGRG…RISAIFSTFI (268 aa)). ATP is bound by residues 1085–1093 (IGRGHFGCV) and lysine 1111. Aspartate 1205 serves as the catalytic Proton acceptor. The segment at 1213-1382 (LDEKFTVKVA…QDIIDGEGDT (170 aa)) is interaction with RANBP9. Tyrosine 1231 carries the post-translational modification Phosphotyrosine. Tyrosine 1235 and tyrosine 1236 each carry phosphotyrosine; by autocatalysis. Residue threonine 1290 is modified to Phosphothreonine. An interaction with MUC20 region spans residues 1321 to 1360 (WHPKAELRPSFSELVSRISAIFSTFIGEHYVHVNATYVNV). Phosphotyrosine; by autocatalysis occurs at positions 1350 and 1357. A Phosphotyrosine modification is found at tyrosine 1366.

Belongs to the protein kinase superfamily. Tyr protein kinase family. As to quaternary structure, heterodimer made of an alpha chain (50 kDa) and a beta chain (145 kDa) which are disulfide linked. Binds PLXNB1. Interacts when phosphorylated with downstream effectors including STAT3, PIK3R1, SRC, PCLG1, GRB2 and GAB1. Interacts with SPSB1, SPSB2 and SPSB4. Interacts with INPP5D/SHIP1. When phosphorylated at Tyr-1357, interacts with INPPL1/SHIP2. Interacts with RANBP9 and RANBP10, as well as SPSB1, SPSB2, SPSB3 and SPSB4. SPSB1 binding occurs in the presence and in the absence of HGF, however HGF treatment has a positive effect on this interaction. Interacts with MUC20; prevents interaction with GRB2 and suppresses hepatocyte growth factor-induced cell proliferation. Interacts with GRB10. Interacts with PTPN1 and PTPN2. Interacts with HSP90AA1 and HSP90AB1; the interaction suppresses MET kinase activity. Interacts with tensin TNS3. Interacts (when phosphorylated) with tensin TNS4 (via SH2 domain); the interaction increases MET protein stability by inhibiting MET endocytosis and subsequent lysosomal degradation. In terms of processing, autophosphorylated in response to ligand binding on Tyr-1235 and Tyr-1236 in the kinase domain leading to further phosphorylation of Tyr-1350 and Tyr-1357 in the C-terminal multifunctional docking site. Dephosphorylated by PTPRJ at Tyr-1350 and Tyr-1366. Dephosphorylated by PTPN1 and PTPN2. Ubiquitinated. Ubiquitination by CBL regulates the receptor stability and activity through proteasomal degradation. Post-translationally, O-mannosylation of IPT/TIG domains by TMEM260 is required for protein maturation. O-mannosylated residues are composed of single mannose glycans that are not elongated or modified.

The protein localises to the membrane. The catalysed reaction is L-tyrosyl-[protein] + ATP = O-phospho-L-tyrosyl-[protein] + ADP + H(+). Its activity is regulated as follows. In its inactive state, the C-terminal tail interacts with the catalytic domain and inhibits the kinase activity. Upon ligand binding, the C-terminal tail is displaced and becomes phosphorylated, thus increasing the kinase activity. Its function is as follows. Receptor tyrosine kinase that transduces signals from the extracellular matrix into the cytoplasm by binding to hepatocyte growth factor/HGF ligand. Regulates many physiological processes including proliferation, scattering, morphogenesis and survival. Ligand binding at the cell surface induces autophosphorylation of MET on its intracellular domain that provides docking sites for downstream signaling molecules. Following activation by ligand, interacts with the PI3-kinase subunit PIK3R1, PLCG1, SRC, GRB2, STAT3 or the adapter GAB1. Recruitment of these downstream effectors by MET leads to the activation of several signaling cascades including the RAS-ERK, PI3 kinase-AKT, or PLCgamma-PKC. The RAS-ERK activation is associated with the morphogenetic effects while PI3K/AKT coordinates prosurvival effects. During embryonic development, MET signaling plays a role in gastrulation, development and migration of muscles and neuronal precursors, angiogenesis and kidney formation. In adults, participates in wound healing as well as organ regeneration and tissue remodeling. Also promotes differentiation and proliferation of hematopoietic cells. The chain is Hepatocyte growth factor receptor (MET) from Mustela putorius furo (European domestic ferret).